The chain runs to 432 residues: Trigger factor (432 aa).

Residues 161–246 (EDRVTIDFTG…LKKVEERELP (86 aa)) form the PPIase FKBP-type domain.

Belongs to the FKBP-type PPIase family. Tig subfamily.

Its subcellular location is the cytoplasm. The enzyme catalyses [protein]-peptidylproline (omega=180) = [protein]-peptidylproline (omega=0). In terms of biological role, involved in protein export. Acts as a chaperone by maintaining the newly synthesized protein in an open conformation. Functions as a peptidyl-prolyl cis-trans isomerase. The protein is Trigger factor of Citrobacter koseri (strain ATCC BAA-895 / CDC 4225-83 / SGSC4696).